Consider the following 489-residue polypeptide: Glucose-6-phosphate 1-dehydrogenase (489 aa).

Arg-50 and Lys-151 together coordinate NADP(+). 4 residues coordinate substrate: His-181, Lys-185, Glu-219, and Asp-238. Catalysis depends on His-243, which acts as the Proton acceptor. Residues Lys-341 and Lys-346 each contribute to the substrate site.

The protein belongs to the glucose-6-phosphate dehydrogenase family. Homodimer.

The catalysed reaction is D-glucose 6-phosphate + NADP(+) = 6-phospho-D-glucono-1,5-lactone + NADPH + H(+). It functions in the pathway carbohydrate degradation; pentose phosphate pathway; D-ribulose 5-phosphate from D-glucose 6-phosphate (oxidative stage): step 1/3. In terms of biological role, catalyzes the oxidation of glucose 6-phosphate to 6-phosphogluconolactone. This Gluconobacter oxydans (strain 621H) (Gluconobacter suboxydans) protein is Glucose-6-phosphate 1-dehydrogenase.